Here is a 204-residue protein sequence, read N- to C-terminus: GTP cyclohydrolase 1 (204 aa).

Cysteine 92, histidine 95, and cysteine 165 together coordinate Zn(2+).

It belongs to the GTP cyclohydrolase I family. In terms of assembly, homomer.

The enzyme catalyses GTP + H2O = 7,8-dihydroneopterin 3'-triphosphate + formate + H(+). Its pathway is cofactor biosynthesis; 7,8-dihydroneopterin triphosphate biosynthesis; 7,8-dihydroneopterin triphosphate from GTP: step 1/1. This Mycolicibacterium paratuberculosis (strain ATCC BAA-968 / K-10) (Mycobacterium paratuberculosis) protein is GTP cyclohydrolase 1.